The chain runs to 183 residues: Disulfide bond formation protein B 2 (183 aa).

Residues 1-9 are Cytoplasmic-facing; it reads MSLACSRSL. A helical membrane pass occupies residues 10–26; it reads FFMAFTAGILALGASYY. Residues 27-44 are Periplasmic-facing; that stretch reads LEYAVGLVPCSLCLVQRL. A disulfide bridge links C36 with C39. Residues 45–61 traverse the membrane as a helical segment; sequence FMSVLTLCCGLAAVHGP. The Cytoplasmic portion of the chain corresponds to 62-68; the sequence is QRVGLSL. A helical membrane pass occupies residues 69–85; it reads YWMVTLLSSLGGTTAAW. The Periplasmic portion of the chain corresponds to 86–142; that stretch reads RQVLFQSDSLQELAHCAPNPEEMFSSLPWLCALMRMFNDTADCAELSWTLFDLSIPE. C101 and C128 are joined by a disulfide. Residues 143-161 form a helical membrane-spanning segment; sequence WSLLFFVGMSILAVYQLLR. Residues 162 to 183 are Cytoplasmic-facing; sequence QVWMALQRPLSGQPSHPALVRD.

Belongs to the DsbB family.

It is found in the cell inner membrane. Functionally, required for disulfide bond formation in some periplasmic proteins. Acts by oxidizing the DsbA protein. The chain is Disulfide bond formation protein B 2 from Pseudomonas fluorescens (strain Pf0-1).